The following is a 171-amino-acid chain: Large ribosomal subunit protein bL9 (171 aa).

This sequence belongs to the bacterial ribosomal protein bL9 family.

In terms of biological role, binds to the 23S rRNA. The polypeptide is Large ribosomal subunit protein bL9 (Rickettsia akari (strain Hartford)).